The primary structure comprises 1025 residues: MAAGKLKKEQQNQSAERESADTGKVNDEDEEHLYGNIDDYKHLIQDEEYDDEDVPHDLQLSEDEYNSERDSSLLAEFSDYGEISEDDEEDFMNAIREASNFKVKKKKKNDKGKSYGRQRKERVLDPEVAQLLSQANEAFVRNDLQVAERLFNEVIKKDARNFAAYETLGDIYQLQGRLNDCCNSWFLAAHLNASDWEFWKIVAILSADLDHVRQAIYCFSRVISLNPMEWESIYRRSMLYKKTGQLARALDGFQRLYMYNPYDANILRELAILYVDYDRIEDSIELYMKVFNANVERREAILAALENALDSSDEESAAEGEDADEKEPLEQDEDRQMFPDINWKKIDAKYKCIPFDWSSLNILAELFLKLAVSEVDGIKTIKKCARWIQRRESQTFWDHVPDDSEFDNRRFKNSTFDSLLAAEKEKSYNIPIDIRVRLGLLRLNTDNLVEALNHFQCLYDETFSDVADLYFEAATALTRAEKYKEAIDFFTPLLSLEEWRTTDVFKPLARCYKEIESYETAKEFYELAIKSEPDDLDIRVSLAEVYYRLNDPETFKHMLVDVVEMRKHQVDETLHRISNEKSSNDTSDISSKPLLEDSKFRTFRKKKRTPYDAERERIERERRITAKVVDKYEKMKKFELNSGLNEAKQASIWINTVSELVDIFSSVKNFFMKSRSRKFVGILRRTKKFNTELDFQIERLSKLAEGDSVFEGPLMEERVTLTSATELRGLSYEQWFELFMELSLVIAKYQSVEDGLSVVETAQEVNVFFQDPERVKMMKFVKLAIVLQMDDEEELAENLRGLLNQFQFNRKVLQVFMYSLCRGPSSLNILSSTIQQKFFLRQLKAFDSCRYNTEVNGQASITNKEVYNPNKKSSPYLYYIYAVLLYSSRGFLSALQYLTRLEEDIPDDPMVNLLMGLSHIHRAMQRLTAQRHFQIFHGLRYLYRYHKIRKSLYTDLEKQEADYNLGRAFHLIGLVSIAIEYYNRVLENYDDGKLKKHAAYNSIIIYQQSGNVELADHLMEKYLSI.

Positions M1 to N26 are enriched in basic and acidic residues. A disordered region spans residues M1–S71. Residues D46–Y65 are compositionally biased toward acidic residues. TPR repeat units follow at residues V128–N161, F162–D195, W196–E229, W230–D263, and A264–R297. The interval V128–Q569 is sufficient to bind BDP1. The disordered stretch occupies residues L309 to D334. S311 carries the post-translational modification Phosphoserine. Acidic residues predominate over residues S311–E325. 6 TPR repeats span residues I432 to D465, A467 to T501, T502 to D535, L536 to Q569, P875 to D908, and Q959 to G992.

Component of the TFIIIC complex composed of TFC1, TFC3, TFC4, TFC6, TFC7 and TFC8. The subunits are organized in two globular domains, tauA and tauB, connected by a proteolysis-sensitive and flexible linker. Interacts with TFC1, TFC3, TFC6, TFIIIB subunits BRF1 and BDP1, and with RNA polymerase III subunit RPC10. Post-translationally, phosphorylated.

It is found in the nucleus. In terms of biological role, TFIIIC mediates tRNA and 5S RNA gene activation by binding to intragenic promoter elements. Upstream of the transcription start site, TFIIIC assembles the initiation complex TFIIIB-TFIIIC-tDNA, which is sufficient for RNA polymerase III recruitment and function. Part of the tauA domain of TFIIIC that binds boxA DNA promoter sites of tRNA and similar genes. TFC4 is the TFIIIB-assembling subunit of TFIIIC and essential for viability. In Saccharomyces cerevisiae (strain ATCC 204508 / S288c) (Baker's yeast), this protein is Transcription factor tau 131 kDa subunit (TFC4).